Here is a 695-residue protein sequence, read N- to C-terminus: Probable serine/threonine-protein kinase DDB_G0279405 (695 aa).

Disordered regions lie at residues 119–138 (IVAQ…PQPQ) and 149–192 (QIPT…KRHK). Positions 124 to 138 (QPQPQPQPQPQPQPQ) are enriched in pro residues. Positions 149–160 (QIPTTPPQQISQ) are enriched in low complexity. The span at 161–173 (FNITGNKSPSSIG) shows a compositional bias: polar residues. One can recognise a Protein kinase domain in the interval 201–462 (YVFVRKLGKG…IAEIKSHKWT (262 aa)). ATP-binding positions include 207 to 215 (LGKGTFGKV) and Lys230. The Proton acceptor role is filled by Asp329. The disordered stretch occupies residues 491 to 580 (TDHTIKPSDN…NQNQNNNNNS (90 aa)). Residues 510 to 528 (LSSSSGGESSGIIGSSNES) are compositionally biased toward low complexity. Residues 529 to 541 (KSMYNNVNSKQKI) show a composition bias toward polar residues. Low complexity predominate over residues 542 to 580 (QNQNQNQNQNQNQNQNQNQNQNHNQNQNQNQNQNNNNNS).

The protein belongs to the protein kinase superfamily. Ser/Thr protein kinase family.

The enzyme catalyses L-seryl-[protein] + ATP = O-phospho-L-seryl-[protein] + ADP + H(+). The catalysed reaction is L-threonyl-[protein] + ATP = O-phospho-L-threonyl-[protein] + ADP + H(+). The polypeptide is Probable serine/threonine-protein kinase DDB_G0279405 (Dictyostelium discoideum (Social amoeba)).